We begin with the raw amino-acid sequence, 132 residues long: Small ribosomal subunit protein uS11 (132 aa).

This sequence belongs to the universal ribosomal protein uS11 family. In terms of assembly, part of the 30S ribosomal subunit. Interacts with proteins S7 and S18. Binds to IF-3.

Functionally, located on the platform of the 30S subunit, it bridges several disparate RNA helices of the 16S rRNA. Forms part of the Shine-Dalgarno cleft in the 70S ribosome. This is Small ribosomal subunit protein uS11 from Chlamydia trachomatis serovar D (strain ATCC VR-885 / DSM 19411 / UW-3/Cx).